The following is a 494-amino-acid chain: Glycerol kinase (494 aa).

Residue T13 coordinates ADP. The ATP site is built by T13, T14, and S15. T13 is a binding site for sn-glycerol 3-phosphate. Residue R17 participates in ADP binding. Sn-glycerol 3-phosphate is bound by residues R83, E84, Y135, and D244. Residues R83, E84, Y135, D244, and Q245 each contribute to the glycerol site. Positions 266 and 309 each coordinate ADP. Residues T266, G309, Q313, and G410 each contribute to the ATP site. G410 and N414 together coordinate ADP.

Belongs to the FGGY kinase family.

It catalyses the reaction glycerol + ATP = sn-glycerol 3-phosphate + ADP + H(+). The protein operates within polyol metabolism; glycerol degradation via glycerol kinase pathway; sn-glycerol 3-phosphate from glycerol: step 1/1. Inhibited by fructose 1,6-bisphosphate (FBP). Its function is as follows. Key enzyme in the regulation of glycerol uptake and metabolism. Catalyzes the phosphorylation of glycerol to yield sn-glycerol 3-phosphate. The chain is Glycerol kinase from Shewanella baltica (strain OS195).